The primary structure comprises 796 residues: Toll-like receptor 6 (796 aa).

The signal sequence occupies residues 1-31; that stretch reads MTKDKEPIVKSFHFVCLMIIIVGTRIQFSDG. The Extracellular segment spans residues 32-586; sequence NEFAVDKSKR…MSELSCNITL (555 aa). LRR repeat units lie at residues 54–77, 78–101, 102–122, 123–147, 148–168, 169–196, 197–219, 220–250, 251–277, 278–303, 304–330, 331–354, 355–378, 379–404, 405–429, 430–450, 451–474, 475–496, and 497–520; these read TKVLDMSQNYIAELQVSDMSFLSE, LTVLRLSHNRIQLLDLSVFKFNQD, LEYLDLSHNQLQKISCHPIVS, FRHLDLSFNDFKALPICKEFGNLSQ, LNFLGLSAMKLQKLDLLPIAH, LHLSYILLDLRNYYIKENETESLQILNA, KTLHLVFHPTSLFAIQVNISVNT, LGCLQLTNIKLNDDNCQVFIKFLSELTRGST, LLNFTLNHIETTWKCLVRVFQFLWPKP, VEYLNIYNLTIIESIREEDFTYSKTT, LKALTIEHITNQVFLFSQTALYTVFSE, MNIMMLTISDTPFIHMLCPHAPST, FKFLNFTQNVFTDSIFEKCSTLVK, LETLILQKNGLKDLFKVGLMTKDMPS, LEILDVSWNSLESGRHKENCTWVES, IVVLNLSSNMLTDSVFRCLPP, RIKVLDLHSNKIKSVPKQVVKLEA, LQELNVAFNSLTDLPGCGSFSS, and LSVLIIDHNSVSHPSADFFQSCQK. An intrachain disulfide couples Cys117 to Cys139. Asn144 is a glycosylation site (N-linked (GlcNAc...) asparagine). Asn186 and Asn214 each carry an N-linked (GlcNAc...) asparagine glycan. Residues Cys235 and Cys265 are joined by a disulfide bond. Residues Asn253 and Asn285 are each glycosylated (N-linked (GlcNAc...) asparagine). Residues Cys348 and Cys373 are joined by a disulfide bond. Asn359 carries an N-linked (GlcNAc...) asparagine glycan. Residues Asn423 and Asn434 are each glycosylated (N-linked (GlcNAc...) asparagine). A disulfide bond links Cys424 and Cys447. The LRRCT domain maps to 521–575; that stretch reads MRSIKAGDNPFQCTCELREFVKNIDQVSSEVLEGWPDSYKCDYPESYRGSPLKDF. N-linked (GlcNAc...) asparagine glycosylation is present at Asn583. Residues 587–607 traverse the membrane as a helical segment; that stretch reads LIVTIGATMLVLAVTVTSLCI. Residues 608-796 lie on the Cytoplasmic side of the membrane; sequence YLDLPWYLRM…LVTENNDVKS (189 aa). A TIR domain is found at 640 to 781; that stretch reads LQFHAFISYS…LFWANIRAAF (142 aa).

It belongs to the Toll-like receptor family. In terms of assembly, homodimer (via cytoplasmic TIR domain). Heterodimer with TLR2 via their respective extracellular domains. Binds MYD88 via their respective TIR domains. Interacts with CD36, following CD36 stimulation by oxLDL or amyloid-beta 42, and forms a heterodimer with TLR4. The trimeric complex is internalized and triggers inflammatory response. LYN kinase activity facilitates TLR4:TLR6 heterodimerization and signal initiation. The heterodimer TLR2:TLR6 interacts with CD14 and CD36 in response to triacylated lipopeptides. Detected in monocytes, CD11c+ immature dendritic cells, plasmacytoid pre-dendritic cells and dermal microvessel endothelial cells.

Its subcellular location is the cell membrane. It localises to the cytoplasmic vesicle. The protein resides in the phagosome membrane. It is found in the membrane raft. The protein localises to the golgi apparatus. Functionally, participates in the innate immune response to Gram-positive bacteria and fungi. Specifically recognizes diacylated and, to a lesser extent, triacylated lipopeptides. In response to diacylated lipopeptides, forms the activation cluster TLR2:TLR6:CD14:CD36, this cluster triggers signaling from the cell surface and subsequently is targeted to the Golgi in a lipid-raft dependent pathway. Acts via MYD88 and TRAF6, leading to NF-kappa-B activation, cytokine secretion and the inflammatory response. Recognizes mycoplasmal macrophage-activating lipopeptide-2kD (MALP-2), soluble tuberculosis factor (STF), phenol-soluble modulin (PSM) and B.burgdorferi outer surface protein A lipoprotein (OspA-L) cooperatively with TLR2. In complex with TLR4, promotes sterile inflammation in monocytes/macrophages in response to oxidized low-density lipoprotein (oxLDL) or amyloid-beta 42. In this context, the initial signal is provided by oxLDL- or amyloid-beta 42-binding to CD36. This event induces the formation of a heterodimer of TLR4 and TLR6, which is rapidly internalized and triggers inflammatory response, leading to the NF-kappa-B-dependent production of CXCL1, CXCL2 and CCL9 cytokines, via MYD88 signaling pathway, and CCL5 cytokine, via TICAM1 signaling pathway, as well as IL1B secretion. This Homo sapiens (Human) protein is Toll-like receptor 6 (TLR6).